The primary structure comprises 253 residues: Succinate dehydrogenase iron-sulfur subunit (253 aa).

Residues Cys-64, Cys-69, and Cys-84 each coordinate [2Fe-2S] cluster. The 4Fe-4S ferredoxin-type domain occupies 146-174 (RQWAYELSKCMTCGVCLEACPNVNSKSKF). The [4Fe-4S] cluster site is built by Cys-155, Cys-158, and Cys-161. Cys-165, Cys-212, and Cys-218 together coordinate [3Fe-4S] cluster. [4Fe-4S] cluster is bound at residue Cys-222.

Belongs to the succinate dehydrogenase/fumarate reductase iron-sulfur protein family. In B.subtilis succinate dehydrogenase forms part of an enzyme complex containing three subunits: a flavoprotein, an iron-sulfur protein and cytochrome b-558. [2Fe-2S] cluster is required as a cofactor. It depends on [3Fe-4S] cluster as a cofactor. Requires [4Fe-4S] cluster as cofactor.

It catalyses the reaction a quinone + succinate = fumarate + a quinol. It functions in the pathway carbohydrate metabolism; tricarboxylic acid cycle; fumarate from succinate (bacterial route): step 1/1. This is Succinate dehydrogenase iron-sulfur subunit (sdhB) from Bacillus subtilis (strain 168).